Reading from the N-terminus, the 1241-residue chain is MLVARSGCSRTLIRMGNDENLMVMVDVEEGEIPDSVNTEIEVKHKSTTTTADVGGDVDVGVVAGGRGGGGGGSNGNSRVWTMEELISQYPAYRPYANSGLSNLAWARAVQNKPFNEGLVMDYEPRESDKIVIEDSDDEKEEGELEEGEIDLVDNASDDNLVEKDTESVVLISADKVEDDRILKERDLEKKVKLIRGVLESTSLVEAQTGFEGVCSRILGALESLRELVSDNDDFPKRDTLVQLSFASLQTINYVFCSMNNISKERNKETMSRLLTLVNDHFSQFLSFNQKNEIETMNQDLSRSAIAVFAGTSSEENVNQMTQPSNGDSFLAKKLTSESTHRGAAYLRSRLPMLPLLDLHKDHDADSLPSPTRETTPSLPVNGRHTMVRPGFPVGRESQTTEGAKVYSYESDARKAVSTYQQKFGLNSVFKTDDLPSPTPSGEPNDGNGDVGGEVSSSVVKSSNPGSHLIYGQDVPLPSNFNSRSMPVANSVSSTVPPHHLSIHAISAPTASDQTVKPSAKSRDPRLRLAKPDAANVTIYSYSSGDARNLSKVELSADLVNPRKQKAADEFLIDGPAWKRQKSDTDAPKAAGTGGWLEDTESSGLLKLESKPRLIENGVTSMTSSVMPTSAVSVSQKVRTASTDTASLQSLLKDIAVNPTMLLNLLKMGERQKVPEKAIQKPMDPRRAAQLPGSSVQPGVSTPLSIPASNALAANSLNSGVLQDSSQNAPAAESGSIRMKPRDPRRILHGSTLQRTDSSMEKQTKVNDPSTLGTLTMKGKAEDLETPPQLDPRQNISQNGTSKMKISGELLSGKTPDFSTQFTKNLKSIADMVVVSQQLGNPPASMHSVQLKTERDVKHNPSNPNAQDEDVSVSAASVTAAAGPTRSMNSWGDVEHLFEGYDDIQRVAIQRERVRRLEEQNKMFASQKLSLVLDIDHTLLNSAKFNEVESRHEEILRKKEEQDREKPYRHLFRFLHMGMWTKLRPGIWNFLEKASKLYELHLYTMGNKLYATEMAKLLDPKGVLFNGRVISKGDDGDPLDGDERVPKSKDLEGVMGMESSVVIIDDSVRVWPQHKMNLIAVERYLYFPCSRRQFGLLGPSLLELDRDEVPEEGTLASSLAVIEKIHQNFFSHTSLDEVDVRNILASEQRKILAGCRIVFSRIIPVGEAKPHLHPLWQTAEQFGAVCTTQVDEHVTHVVTNSLGTDKVNWALTRGRFVVHPGWVEASAFLYQRANENLYAINP.

Disordered stretches follow at residues 361 to 402 (DHDA…TTEG), 428 to 470 (VFKT…HLIY), 505 to 525 (ISAP…RDPR), 578 to 598 (KRQK…WLED), 677 to 702 (AIQK…VSTP), 720 to 800 (VLQD…QNGT), and 852 to 885 (TERD…GPTR). The span at 368–378 (PSPTRETTPSL) shows a compositional bias: polar residues. Low complexity predominate over residues 441 to 466 (GEPNDGNGDVGGEVSSSVVKSSNPGS). A compositionally biased stretch (basic and acidic residues) spans 677–686 (AIQKPMDPRR). 2 stretches are compositionally biased toward polar residues: residues 691-702 (PGSSVQPGVSTP) and 791-800 (PRQNISQNGT). The span at 871-881 (SVSAASVTAAA) shows a compositional bias: low complexity. The 181-residue stretch at 923-1103 (FASQKLSLVL…GLLGPSLLEL (181 aa)) folds into the FCP1 homology domain. The 94-residue stretch at 1146 to 1239 (EQRKILAGCR…QRANENLYAI (94 aa)) folds into the BRCT domain.

Interacts with RAP74. Mg(2+) is required as a cofactor. Requires Co(2+) as cofactor. Mn(2+) serves as cofactor.

Its subcellular location is the nucleus. The enzyme catalyses O-phospho-L-seryl-[protein] + H2O = L-seryl-[protein] + phosphate. It carries out the reaction O-phospho-L-threonyl-[protein] + H2O = L-threonyl-[protein] + phosphate. Completely dephosphorylates 'Ser-2', and partially 'Ser-5' and 'Ser-7' of the heptad repeats YSPTSPS in the C-terminal domain (CTD) of the largest RNA polymerase II subunit (RPB1). Involved in defense response. Acts as a negative regulator of immune gene expression and immunity to pathogen infections. Preferentially dephosphorylates 'Ser-2' of RNA polymerase II CTD. This counterregulates the MAP kinase (MAPK) or cyclin-dependent kinase C (CDKC)-mediated phosphorylation of CTD in response to pathogens and upon perception of microbe-associated molecular patterns (MAMPs). MAPKs phosphorylate and activate CDKCs, which are CTD kinases that positively regulate plant innate immunity. Acts as a negative regulator of stress gene transcription involved in abscisic acid (ABA) mediated signaling pathway and cold resistance. Acts as a post-transcriptional gene silencing (PTGS) suppressor. This Arabidopsis thaliana (Mouse-ear cress) protein is RNA polymerase II C-terminal domain phosphatase-like 3.